Reading from the N-terminus, the 102-residue chain is Small ribosomal subunit protein uS10 (102 aa).

The protein belongs to the universal ribosomal protein uS10 family. In terms of assembly, part of the 30S ribosomal subunit.

Its function is as follows. Involved in the binding of tRNA to the ribosomes. The sequence is that of Small ribosomal subunit protein uS10 from Rhodopseudomonas palustris (strain BisB18).